The chain runs to 95 residues: Large ribosomal subunit protein bL25 (95 aa).

It belongs to the bacterial ribosomal protein bL25 family. As to quaternary structure, part of the 50S ribosomal subunit; part of the 5S rRNA/L5/L18/L25 subcomplex. Contacts the 5S rRNA. Binds to the 5S rRNA independently of L5 and L18.

Functionally, this is one of the proteins that binds to the 5S RNA in the ribosome where it forms part of the central protuberance. In Shewanella pealeana (strain ATCC 700345 / ANG-SQ1), this protein is Large ribosomal subunit protein bL25.